A 69-amino-acid chain; its full sequence is DNA gyrase inhibitor YacG (69 aa).

Cys7, Cys10, Cys26, and Cys30 together coordinate Zn(2+).

This sequence belongs to the DNA gyrase inhibitor YacG family. In terms of assembly, interacts with GyrB. The cofactor is Zn(2+).

Functionally, inhibits all the catalytic activities of DNA gyrase by preventing its interaction with DNA. Acts by binding directly to the C-terminal domain of GyrB, which probably disrupts DNA binding by the gyrase. The chain is DNA gyrase inhibitor YacG from Shewanella sp. (strain ANA-3).